A 1052-amino-acid chain; its full sequence is Carboxylic acid reductase (1052 aa).

Residues 21 to 344 (RALNEPNREW…ATEFTPFPFY (324 aa)) form an adenylation (A) domain region. Residues 334-335 (SA), Thr339, and 419-422 (YQGR) contribute to the AMP site. The region spanning 560–643 (SSSDALIVSI…RLADYLLSIV (84 aa)) is the Carrier domain. Position 595 is an O-(pantetheine 4'-phosphoryl)serine (Ser595). Positions 684–979 (GQVVVITGTT…QKIVPLDEWL (296 aa)) are carboxylic acid reductase (R) domain. NADP(+) is bound by residues 693-696 (TGGI), Arg718, 774-776 (NQW), Ser814, Tyr844, and Lys848.

It belongs to the adenylate-forming reductase family. Requires Mg(2+) as cofactor.

It catalyses the reaction an aromatic aldehyde + AMP + diphosphate + NADP(+) = an aromatic carboxylate + ATP + NADPH + H(+). The enzyme catalyses a carboxylate + ATP + NADPH + H(+) = an aldehyde + AMP + diphosphate + NADP(+). It carries out the reaction benzoate + ATP + NADPH + H(+) = benzaldehyde + AMP + diphosphate + NADP(+). The catalysed reaction is (E)-cinnamate + ATP + NADPH + H(+) = (E)-cinnamaldehyde + AMP + diphosphate + NADP(+). It catalyses the reaction piperonylate + ATP + NADPH + H(+) = piperonal + AMP + diphosphate + NADP(+). The enzyme catalyses salicylate + ATP + NADPH + H(+) = salicylaldehyde + AMP + diphosphate + NADP(+). It carries out the reaction 3-hydroxybenzoate + ATP + NADPH + H(+) = 3-hydroxybenzaldehyde + AMP + diphosphate + NADP(+). The catalysed reaction is 2-methoxybenzoate + ATP + NADPH + H(+) = 2-methoxybenzaldehyde + AMP + diphosphate + NADP(+). It catalyses the reaction 3-methoxybenzoate + ATP + NADPH + H(+) = 3-methoxybenzaldehyde + AMP + diphosphate + NADP(+). The enzyme catalyses 4-hydroxybenzoate + ATP + NADPH + H(+) = 4-hydroxybenzaldehyde + AMP + diphosphate + NADP(+). It carries out the reaction 4-methoxybenzoate + ATP + NADPH + H(+) = 4-methoxybenzaldehyde + AMP + diphosphate + NADP(+). The catalysed reaction is 3-phenylpropanoate + ATP + NADPH + H(+) = 3-phenylpropanal + AMP + diphosphate + NADP(+). It catalyses the reaction picolinate + ATP + NADPH + H(+) = picolinal + AMP + diphosphate + NADP(+). The enzyme catalyses propanoate + ATP + NADPH + H(+) = propanal + AMP + diphosphate + NADP(+). It carries out the reaction butanoate + ATP + NADPH + H(+) = butanal + AMP + diphosphate + NADP(+). The catalysed reaction is pentanoate + ATP + NADPH + H(+) = pentanal + AMP + diphosphate + NADP(+). It catalyses the reaction hexanoate + ATP + NADPH + H(+) = hexanal + AMP + diphosphate + NADP(+). The enzyme catalyses heptanoate + ATP + NADPH + H(+) = heptanal + AMP + diphosphate + NADP(+). It carries out the reaction octanoate + ATP + NADPH + H(+) = octanal + AMP + diphosphate + NADP(+). The catalysed reaction is nonanoate + ATP + NADPH + H(+) = nonanal + AMP + diphosphate + NADP(+). Its function is as follows. Carboxylic acid reductase that shows a broad range of substrate specificity towards aromatic acids, especially to phenyl carboxylic and phenyl acrylic acids, to convert them into their respective aldehydes. Also able to use aliphatic acids as substrates. This is Carboxylic acid reductase from Neurospora crassa (strain ATCC 24698 / 74-OR23-1A / CBS 708.71 / DSM 1257 / FGSC 987).